Consider the following 134-residue polypeptide: DNA-binding protein H-NS, plasmid (134 aa).

A coiled-coil region spans residues 23–67; that stretch reads LEILEELLEKLSVVVEERRQEESSKEAELKARLEKIESLRQLMLE. Positions 77–96 are disordered; sequence SSFSAKSGAPKKVREPRPAK. The DNA-binding element occupies 112-117; it reads QGRTPK.

Belongs to the histone-like protein H-NS family. As to quaternary structure, homodimer that oligomerizes on DNA into higher-order complexes that form bridges between disparate regions of DNA compacting it. Interacts with Hha, YdgT and StpA.

The protein localises to the cytoplasm. Its subcellular location is the nucleoid. In terms of biological role, a DNA-binding protein implicated in transcriptional repression and chromosome organization and compaction. Binds DNA, modifying gene expression, especially non-core genes. Does not regulate the same set of genes as its chromosomal counterpart (tested in S.typhimurium strain SL1344 / SV5015, chromosomal H-NS protein is AC A0A0H3NBY9). Thus it has a not-completely overlapping set of gene targets compared to its chromosomal homolog; many of these target genes are either plasmid-encoded or acquired by horizontally transferred genes (HTG). This protein can function in the absence of H-NS-modulating protein Hha (either chromosomal or plasmid-encoded), although many HTG genes are regulated by an H-NS/Hha complex. Binds nucleation sites in AT-rich DNA and bridges them, forming higher-order nucleoprotein complexes and condensing the chromosome. A subset of genes are repressed by H-NS in association with Hha and/or Cnu (ydgT). This is DNA-binding protein H-NS, plasmid (hns) from Salmonella typhi.